Consider the following 338-residue polypeptide: Glyceraldehyde-3-phosphate dehydrogenase (338 aa).

Residues arginine 13–isoleucine 14, aspartate 35, and arginine 80 contribute to the NAD(+) site. Residues serine 151–threonine 153, threonine 182, threonine 211–glycine 212, and arginine 234 contribute to the D-glyceraldehyde 3-phosphate site. The active-site Nucleophile is cysteine 152. NAD(+) is bound at residue asparagine 317.

It belongs to the glyceraldehyde-3-phosphate dehydrogenase family. As to quaternary structure, homotetramer.

The protein localises to the cytoplasm. The enzyme catalyses D-glyceraldehyde 3-phosphate + phosphate + NAD(+) = (2R)-3-phospho-glyceroyl phosphate + NADH + H(+). It functions in the pathway carbohydrate degradation; glycolysis; pyruvate from D-glyceraldehyde 3-phosphate: step 1/5. The chain is Glyceraldehyde-3-phosphate dehydrogenase (gpdA) from Aspergillus oryzae (strain ATCC 42149 / RIB 40) (Yellow koji mold).